A 236-amino-acid chain; its full sequence is Adenosine 5'-phosphosulfate reductase (236 aa).

Residues Cys-123, Cys-124, Cys-206, and Cys-209 each contribute to the [4Fe-4S] cluster site. Catalysis depends on Cys-232, which acts as the Nucleophile; cysteine thiosulfonate intermediate.

This sequence belongs to the PAPS reductase family. CysH subfamily. The cofactor is [4Fe-4S] cluster.

It is found in the cytoplasm. The catalysed reaction is [thioredoxin]-disulfide + sulfite + AMP + 2 H(+) = adenosine 5'-phosphosulfate + [thioredoxin]-dithiol. Its pathway is sulfur metabolism; hydrogen sulfide biosynthesis; sulfite from sulfate. Catalyzes the formation of sulfite from adenosine 5'-phosphosulfate (APS) using thioredoxin as an electron donor. This is Adenosine 5'-phosphosulfate reductase from Streptomyces coelicolor (strain ATCC BAA-471 / A3(2) / M145).